The chain runs to 122 residues: Large ribosomal subunit protein uL14 (122 aa).

This sequence belongs to the universal ribosomal protein uL14 family. As to quaternary structure, part of the 50S ribosomal subunit. Forms a cluster with proteins L3 and L19. In the 70S ribosome, L14 and L19 interact and together make contacts with the 16S rRNA in bridges B5 and B8.

In terms of biological role, binds to 23S rRNA. Forms part of two intersubunit bridges in the 70S ribosome. The chain is Large ribosomal subunit protein uL14 from Psychrobacter arcticus (strain DSM 17307 / VKM B-2377 / 273-4).